The following is a 222-amino-acid chain: MNVAILLAAGKGERMSENVPKQFLEIEGRMLFEYPLSTFLKSEAIDGVVIVTRREWFEVVEKRVFHEKVLGIVEGGDTRSQSVRSALEFLEKFSPSYVLVHDSARPFLRKKHVSEVLRRARETGAATLALKNSDALVRVENDRMEYIPRKGVYRILTPQAFSYEILKKAHENGGEWADDTEPVQKLGVKIALVEGDPLCFKVTFKEDLELARIIAREWERIP.

The protein belongs to the IspD/TarI cytidylyltransferase family. IspD subfamily.

The enzyme catalyses 2-C-methyl-D-erythritol 4-phosphate + CTP + H(+) = 4-CDP-2-C-methyl-D-erythritol + diphosphate. It functions in the pathway isoprenoid biosynthesis; isopentenyl diphosphate biosynthesis via DXP pathway; isopentenyl diphosphate from 1-deoxy-D-xylulose 5-phosphate: step 2/6. Functionally, catalyzes the formation of 4-diphosphocytidyl-2-C-methyl-D-erythritol from CTP and 2-C-methyl-D-erythritol 4-phosphate (MEP). This is 2-C-methyl-D-erythritol 4-phosphate cytidylyltransferase from Thermotoga petrophila (strain ATCC BAA-488 / DSM 13995 / JCM 10881 / RKU-1).